Here is a 143-residue protein sequence, read N- to C-terminus: Large ribosomal subunit protein uL16c (143 aa).

Belongs to the universal ribosomal protein uL16 family. Part of the 50S ribosomal subunit.

The protein localises to the plastid. Its subcellular location is the chloroplast. This is Large ribosomal subunit protein uL16c from Marchantia polymorpha (Common liverwort).